The primary structure comprises 345 residues: Molybdate/tungstate import ATP-binding protein WtpC (345 aa).

The 230-residue stretch at 2–231 (LKVESISKDY…PKSEEVARFL (230 aa)) folds into the ABC transporter domain. 33–40 (GPSGSGKT) contacts ATP. Residues 280-345 (KTSARNVFKA…FKASAIHVFP (66 aa)) form the Mop domain.

It belongs to the ABC transporter superfamily. Sulfate/tungstate importer (TC 3.A.1.6) family. As to quaternary structure, the complex is composed of two ATP-binding proteins (WtpC), two transmembrane proteins (WtpB) and a solute-binding protein (WtpA).

The protein localises to the cell membrane. It carries out the reaction tungstate(in) + ATP + H2O = tungstate(out) + ADP + phosphate + H(+). Functionally, part of the ABC transporter complex WtpABC involved in molybdate/tungstate import. Responsible for energy coupling to the transport system. This is Molybdate/tungstate import ATP-binding protein WtpC (wtpC) from Pyrococcus horikoshii (strain ATCC 700860 / DSM 12428 / JCM 9974 / NBRC 100139 / OT-3).